A 131-amino-acid polypeptide reads, in one-letter code: uncharacterized protein (131 aa).

A helical membrane pass occupies residues 17 to 39; it reads VILLILILLPVVFLHIMLATWGL.

The protein resides in the membrane. This is an uncharacterized protein from Archaeoglobus fulgidus (strain ATCC 49558 / DSM 4304 / JCM 9628 / NBRC 100126 / VC-16).